A 400-amino-acid polypeptide reads, in one-letter code: Phosphoglycerate kinase (400 aa).

Substrate-binding positions include Asp23–Asn25, Arg38, His61–Arg64, Arg120, and Arg153. ATP-binding positions include Lys203, Glu325, and Gly355–Thr358.

This sequence belongs to the phosphoglycerate kinase family. As to quaternary structure, monomer.

The protein resides in the cytoplasm. It carries out the reaction (2R)-3-phosphoglycerate + ATP = (2R)-3-phospho-glyceroyl phosphate + ADP. The protein operates within carbohydrate degradation; glycolysis; pyruvate from D-glyceraldehyde 3-phosphate: step 2/5. This is Phosphoglycerate kinase from Methylorubrum extorquens (strain CM4 / NCIMB 13688) (Methylobacterium extorquens).